A 200-amino-acid chain; its full sequence is Pyridoxal 5'-phosphate synthase subunit PdxT (200 aa).

Position 52-54 (52-54) interacts with L-glutamine; the sequence is GES. The active-site Nucleophile is the Cys84. L-glutamine-binding positions include Arg115 and 143–144; that span reads IR. Catalysis depends on charge relay system residues His179 and Glu181.

It belongs to the glutaminase PdxT/SNO family. In the presence of PdxS, forms a dodecamer of heterodimers. Only shows activity in the heterodimer.

It carries out the reaction aldehydo-D-ribose 5-phosphate + D-glyceraldehyde 3-phosphate + L-glutamine = pyridoxal 5'-phosphate + L-glutamate + phosphate + 3 H2O + H(+). The catalysed reaction is L-glutamine + H2O = L-glutamate + NH4(+). Its pathway is cofactor biosynthesis; pyridoxal 5'-phosphate biosynthesis. Catalyzes the hydrolysis of glutamine to glutamate and ammonia as part of the biosynthesis of pyridoxal 5'-phosphate. The resulting ammonia molecule is channeled to the active site of PdxS. The sequence is that of Pyridoxal 5'-phosphate synthase subunit PdxT from Methanosarcina barkeri (strain Fusaro / DSM 804).